Consider the following 343-residue polypeptide: Dihydroorotate dehydrogenase (quinone) (343 aa).

Residues 61 to 65 and T85 contribute to the FMN site; that span reads AGLDK. A substrate-binding site is contributed by K65. A substrate-binding site is contributed by 110–114; sequence NRMGF. 2 residues coordinate FMN: N138 and N171. N171 is a substrate binding site. S174 (nucleophile) is an active-site residue. Substrate is bound at residue N176. FMN-binding residues include K216 and T244. Residue 245–246 coordinates substrate; it reads NT. FMN-binding positions include G267, G296, and 317–318; that span reads YS.

Belongs to the dihydroorotate dehydrogenase family. Type 2 subfamily. In terms of assembly, monomer. The cofactor is FMN.

It localises to the cell membrane. The enzyme catalyses (S)-dihydroorotate + a quinone = orotate + a quinol. It functions in the pathway pyrimidine metabolism; UMP biosynthesis via de novo pathway; orotate from (S)-dihydroorotate (quinone route): step 1/1. Its function is as follows. Catalyzes the conversion of dihydroorotate to orotate with quinone as electron acceptor. The chain is Dihydroorotate dehydrogenase (quinone) from Stutzerimonas stutzeri (strain A1501) (Pseudomonas stutzeri).